The following is a 242-amino-acid chain: Probable inactive serine protease 58 (242 aa).

A signal peptide spans 1-17; sequence MNLILLWALLNLPVALT. Residues 18-240 enclose the Peptidase S1 domain; sequence FDPNYKDDIT…YIPWIENTIQ (223 aa). Cystine bridges form between Cys-41–Cys-57, Cys-134–Cys-202, Cys-166–Cys-181, and Cys-192–Cys-216. The N-linked (GlcNAc...) asparagine glycan is linked to Asn-157.

It belongs to the peptidase S1 family.

The protein resides in the secreted. This chain is Probable inactive serine protease 58 (PRSS58), found in Bos taurus (Bovine).